The primary structure comprises 333 residues: DNA-directed RNA polymerase subunit alpha (333 aa).

Positions 1–239 (MSAVLDKGSL…TQARCFLNIA (239 aa)) are alpha N-terminal domain (alpha-NTD). An alpha C-terminal domain (alpha-CTD) region spans residues 259 to 333 (DASDLLSARI…SLGMNLDSHG (75 aa)).

It belongs to the RNA polymerase alpha chain family. In terms of assembly, homodimer. The RNAP catalytic core consists of 2 alpha, 1 beta, 1 beta' and 1 omega subunit. When a sigma factor is associated with the core the holoenzyme is formed, which can initiate transcription.

It catalyses the reaction RNA(n) + a ribonucleoside 5'-triphosphate = RNA(n+1) + diphosphate. In terms of biological role, DNA-dependent RNA polymerase catalyzes the transcription of DNA into RNA using the four ribonucleoside triphosphates as substrates. This chain is DNA-directed RNA polymerase subunit alpha, found in Neorickettsia sennetsu (strain ATCC VR-367 / Miyayama) (Ehrlichia sennetsu).